The following is a 269-amino-acid chain: Magnetosome protein MamX (269 aa).

Residues Met1 to Asp10 lie on the Cytoplasmic side of the membrane. A helical transmembrane segment spans residues Ile11–Leu31. Over Phe32 to Arg269 the chain is Lumenal. Positions Ile48 to Val71 match the MCR (magnetochrome) 1 motif. The heme site is built by Cys65, Cys68, His69, Cys104, Cys107, and His108. The MCR 2 signature appears at Ile87–Ile110.

Belongs to the magnetosome MamX family. As to quaternary structure, probably interacts with FtsZ-like and MamY proteins. Requires heme as cofactor.

It localises to the magnetosome membrane. Its function is as follows. Required for correct biomineralization of the magnetosome, maybe via redox control. May function with MamY, MamZ amd Mms6 in biomineralization. The chain is Magnetosome protein MamX from Magnetospirillum gryphiswaldense (strain DSM 6361 / JCM 21280 / NBRC 15271 / MSR-1).